We begin with the raw amino-acid sequence, 151 residues long: Deoxyuridine 5'-triphosphate nucleotidohydrolase (151 aa).

Residues 70 to 72 (RSG), Asn-83, 87 to 89 (LID), and Met-97 each bind substrate.

It belongs to the dUTPase family. It depends on Mg(2+) as a cofactor.

The enzyme catalyses dUTP + H2O = dUMP + diphosphate + H(+). The protein operates within pyrimidine metabolism; dUMP biosynthesis; dUMP from dCTP (dUTP route): step 2/2. Its function is as follows. This enzyme is involved in nucleotide metabolism: it produces dUMP, the immediate precursor of thymidine nucleotides and it decreases the intracellular concentration of dUTP so that uracil cannot be incorporated into DNA. The protein is Deoxyuridine 5'-triphosphate nucleotidohydrolase of Azotobacter vinelandii (strain DJ / ATCC BAA-1303).